Reading from the N-terminus, the 39-residue chain is Potassium channel toxin alpha-KTx 2.24 (39 aa).

3 disulfides stabilise this stretch: Cys-7–Cys-29, Cys-13–Cys-34, and Cys-17–Cys-36.

It belongs to the short scorpion toxin superfamily. Potassium channel inhibitor family. Alpha-KTx 02 subfamily. In terms of tissue distribution, expressed by the venom gland.

It is found in the secreted. In terms of biological role, blocks human voltage-gated potassium (Kv) channels Kv1.1/KCNA, Kv1.2/KCNA2 and Kv1.3/KCNA3. Exhibits high affinity for Kv1.2/KCNA2 and selectivity over Kv1.1/KCNA and Kv1.3/KCNA3. The protein is Potassium channel toxin alpha-KTx 2.24 of Centruroides bonito (Scorpion).